The sequence spans 81 residues: Photosystem I iron-sulfur center (81 aa).

2 consecutive 4Fe-4S ferredoxin-type domains span residues 1 to 31 and 39 to 68; these read MAHS…MVPW and IASA…VRVY. Residues cysteine 11, cysteine 14, cysteine 17, cysteine 21, cysteine 48, cysteine 51, cysteine 54, and cysteine 58 each coordinate [4Fe-4S] cluster.

The eukaryotic PSI reaction center is composed of at least 11 subunits. It depends on [4Fe-4S] cluster as a cofactor.

It is found in the plastid. Its subcellular location is the chloroplast thylakoid membrane. It carries out the reaction reduced [plastocyanin] + hnu + oxidized [2Fe-2S]-[ferredoxin] = oxidized [plastocyanin] + reduced [2Fe-2S]-[ferredoxin]. Apoprotein for the two 4Fe-4S centers FA and FB of photosystem I (PSI); essential for photochemical activity. FB is the terminal electron acceptor of PSI, donating electrons to ferredoxin. The C-terminus interacts with PsaA/B/D and helps assemble the protein into the PSI complex. Required for binding of PsaD and PsaE to PSI. PSI is a plastocyanin-ferredoxin oxidoreductase, converting photonic excitation into a charge separation, which transfers an electron from the donor P700 chlorophyll pair to the spectroscopically characterized acceptors A0, A1, FX, FA and FB in turn. This is Photosystem I iron-sulfur center from Welwitschia mirabilis (Tree tumbo).